A 75-amino-acid chain; its full sequence is Small ribosomal subunit protein bS18c (75 aa).

It belongs to the bacterial ribosomal protein bS18 family. As to quaternary structure, part of the 30S ribosomal subunit.

It localises to the plastid. It is found in the chloroplast. This is Small ribosomal subunit protein bS18c from Angiopteris evecta (Mule's foot fern).